A 397-amino-acid polypeptide reads, in one-letter code: Odorant receptor 98a (397 aa).

Topologically, residues methionine 1–tyrosine 43 are cytoplasmic. The helical transmembrane segment at tyrosine 44 to isoleucine 64 threads the bilayer. Residues serine 65–glutamate 77 are Extracellular-facing. The helical transmembrane segment at leucine 78–phenylalanine 98 threads the bilayer. Residues asparagine 99–alanine 138 are Cytoplasmic-facing. A helical transmembrane segment spans residues tyrosine 139–leucine 159. The Extracellular portion of the chain corresponds to serine 160–methionine 192. Asparagine 187 carries an N-linked (GlcNAc...) asparagine glycan. Residues leucine 193–leucine 213 traverse the membrane as a helical segment. Over arginine 214 to threonine 266 the chain is Cytoplasmic. The chain crosses the membrane as a helical span at residues isoleucine 267–phenylalanine 287. The Extracellular segment spans residues phenylalanine 288–threonine 293. Residues glycine 294–valine 314 traverse the membrane as a helical segment. The Cytoplasmic segment spans residues cysteine 315–lysine 354. A helical membrane pass occupies residues serine 355–alanine 375. Topologically, residues lysine 376–asparagine 397 are extracellular.

This sequence belongs to the insect chemoreceptor superfamily. Heteromeric odorant receptor channel (TC 1.A.69) family. Or2a subfamily. In terms of assembly, interacts with Orco. Complexes exist early in the endomembrane system in olfactory sensory neurons (OSNs), coupling these complexes to the conserved ciliary trafficking pathway. In terms of tissue distribution, expressed in olfactory sensory neurons in the antenna.

It is found in the cell membrane. Odorant receptor which mediates acceptance or avoidance behavior, depending on its substrates. The odorant receptor repertoire encodes a large collection of odor stimuli that vary widely in identity, intensity, and duration. May form a complex with Orco to form odorant-sensing units, providing sensitive and prolonged odorant signaling and calcium permeability. The sequence is that of Odorant receptor 98a (Or98a) from Drosophila melanogaster (Fruit fly).